Reading from the N-terminus, the 207-residue chain is Suppressor of IKBKE 1 (207 aa).

Coiled-coil stretches lie at residues 4–32 (TIDK…LIDQ) and 154–193 (DAIQ…SLHS). The disordered stretch occupies residues 186–207 (TSKESLHSSKRESEWNFSEKTQ). Residues 189-199 (ESLHSSKRESE) are compositionally biased toward basic and acidic residues.

It belongs to the SIKE family. Interacts with IKBKE and TBK1 via its coiled coil region. Interaction with TBK1 is disrupted upon viral infection or TLR3 stimulation. Interacts with CDC42BPB. Associates with the STRIPAK core complex composed of PP2A catalytic and scaffolding subunits, the striatins (PP2A regulatory subunits), the striatin-associated proteins MOB4, STRIP1 and STRIP2, PDCD10 and members of the STE20 kinases, such as STK24 and STK26.

In terms of biological role, suppressor of IKK-epsilon. Associates with the striatin-interacting phosphatase and kinase (STRIPAK) core complex, forming the extended (SIKE1:SLMAP)STRIPAK complex. The (SIKE1:SLMAP)STRIPAK complex dephosphorylates STK3 leading to the inhibition of Hippo signaling and the control of cell growth. In Xenopus tropicalis (Western clawed frog), this protein is Suppressor of IKBKE 1 (sike1).